Consider the following 86-residue polypeptide: MANIKSSKKDSIKSRKKKKLNASKKSMIKTLIKKVKIAILSGDKLKSELAFSKIQPILDRYSAKGLIHKNKAARHKSNLKCKINAL.

The segment at 1 to 23 is disordered; that stretch reads MANIKSSKKDSIKSRKKKKLNAS.

Belongs to the bacterial ribosomal protein bS20 family.

Its function is as follows. Binds directly to 16S ribosomal RNA. The polypeptide is Small ribosomal subunit protein bS20 (Buchnera aphidicola subsp. Baizongia pistaciae (strain Bp)).